The primary structure comprises 250 residues: UPF0014 membrane protein YjkA (250 aa).

The next 6 membrane-spanning stretches (helical) occupy residues 3 to 23, 32 to 52, 57 to 77, 91 to 111, 117 to 137, and 214 to 234; these read YLSL…SKSF, IIAT…LSLI, HPVF…QNVI, FAAL…LHII, YVIP…SLFL, and LLIV…LSVL.

The protein belongs to the UPF0014 family.

The protein resides in the cell membrane. The polypeptide is UPF0014 membrane protein YjkA (yjkA) (Bacillus subtilis (strain 168)).